The sequence spans 534 residues: Beta-1,2-xylosyltransferase (534 aa).

Residues 1-11 (MSKRNPKILKI) are Cytoplasmic-facing. The chain crosses the membrane as a helical; Signal-anchor for type II membrane protein span at residues 12 to 34 (FLYMLLLNSLFLIIYFVFHSSSF). At 35–534 (SPEQSQPPHI…LTEIMKSLGC (500 aa)) the chain is on the lumenal side. Asn-51, Asn-301, and Asn-479 each carry an N-linked (GlcNAc...) asparagine glycan.

In terms of processing, glycosylation at least at one of the two sites Asn-51 and Asn-301 is necessary for enzyme stability and activity.

Its subcellular location is the golgi apparatus membrane. The catalysed reaction is N(4)-{beta-D-GlcNAc-(1-&gt;2)-alpha-D-Man-(1-&gt;3)-[beta-D-GlcNAc-(1-&gt;2)-alpha-D-Man-(1-&gt;6)]-beta-D-Man-(1-&gt;4)-beta-D-GlcNAc-(1-&gt;4)-beta-D-GlcNAc}-L-asparaginyl-[protein] + UDP-alpha-D-xylose = N(4)-{beta-D-GlcNAc-(1-&gt;2)-alpha-D-Man-(1-&gt;3)-[beta-D-GlcNAc-(1-&gt;2)-alpha-D-Man-(1-&gt;6)]-[beta-D-Xyl-(1-&gt;2)]-beta-D-Man-(1-&gt;4)-beta-D-GlcNAc-(1-&gt;4)-beta-D-GlcNAc}-L-asparaginyl-[protein] + UDP + H(+). Its pathway is protein modification; protein glycosylation. Its function is as follows. Glycosyltransferase involved in the xylosylation of N-glycans. Possesses beta-1,2-xylosyltransferase activity, transferring xylose from UDP-xylose to the core beta-linked mannose of N-glycans. Involved in the biosynthesis of glycoprotein bound N-glycans. Does not require metal ions for its activity. This chain is Beta-1,2-xylosyltransferase, found in Arabidopsis thaliana (Mouse-ear cress).